The primary structure comprises 591 residues: 2-succinyl-5-enolpyruvyl-6-hydroxy-3-cyclohexene-1-carboxylate synthase (591 aa).

This sequence belongs to the TPP enzyme family. MenD subfamily. As to quaternary structure, homodimer. Mg(2+) serves as cofactor. The cofactor is Mn(2+). It depends on thiamine diphosphate as a cofactor.

The enzyme catalyses isochorismate + 2-oxoglutarate + H(+) = 5-enolpyruvoyl-6-hydroxy-2-succinyl-cyclohex-3-ene-1-carboxylate + CO2. It participates in quinol/quinone metabolism; 1,4-dihydroxy-2-naphthoate biosynthesis; 1,4-dihydroxy-2-naphthoate from chorismate: step 2/7. Its pathway is quinol/quinone metabolism; menaquinone biosynthesis. Catalyzes the thiamine diphosphate-dependent decarboxylation of 2-oxoglutarate and the subsequent addition of the resulting succinic semialdehyde-thiamine pyrophosphate anion to isochorismate to yield 2-succinyl-5-enolpyruvyl-6-hydroxy-3-cyclohexene-1-carboxylate (SEPHCHC). The chain is 2-succinyl-5-enolpyruvyl-6-hydroxy-3-cyclohexene-1-carboxylate synthase from Salinibacter ruber (strain DSM 13855 / M31).